A 313-amino-acid chain; its full sequence is Porphobilinogen deaminase (313 aa).

Cysteine 241 carries the post-translational modification S-(dipyrrolylmethanemethyl)cysteine.

The protein belongs to the HMBS family. In terms of assembly, monomer. Dipyrromethane serves as cofactor.

The catalysed reaction is 4 porphobilinogen + H2O = hydroxymethylbilane + 4 NH4(+). Its pathway is porphyrin-containing compound metabolism; protoporphyrin-IX biosynthesis; coproporphyrinogen-III from 5-aminolevulinate: step 2/4. It functions in the pathway porphyrin-containing compound metabolism; chlorophyll biosynthesis. Tetrapolymerization of the monopyrrole PBG into the hydroxymethylbilane pre-uroporphyrinogen in several discrete steps. The protein is Porphobilinogen deaminase of Chlorobium luteolum (strain DSM 273 / BCRC 81028 / 2530) (Pelodictyon luteolum).